The sequence spans 343 residues: MTTDTTGRTGNPAAAASPDRFRYGFLKGNPQLTKNGELKHLLSIEGLPRSIVNHILDTAEQFVSVTDREVKKVPLLRGKSVFNLFFENSTRTRTTFEIAATRLSADVLNLNINASSTSKGESLLDTINNLSAMHADLFVVRHASSGAPYLIAEHCAPHVHVINAGDGRHAHPTQGLLDMYTIRHYKRDFTKLRVAIVGDILHSRVARSDIHALTTLGVPEVRAIGPRTLLPGGLEQMGVKVFHNLDEGLKGVDVIIMLRLQNERMSGALLPSAQEYFKTWGLTPERLALAAPDAIVMHPGPMNRGVEIDSQVADGPQSVILNQVTFGIAVRMAVMGIVAGNSD.

The carbamoyl phosphate site is built by Arg91 and Thr92. An L-aspartate-binding site is contributed by Lys119. 3 residues coordinate carbamoyl phosphate: Arg141, His171, and Gln174. Arg204 and Arg259 together coordinate L-aspartate. The carbamoyl phosphate site is built by Gly300 and Pro301.

It belongs to the aspartate/ornithine carbamoyltransferase superfamily. ATCase family. Heterododecamer (2C3:3R2) of six catalytic PyrB chains organized as two trimers (C3), and six regulatory PyrI chains organized as three dimers (R2).

The catalysed reaction is carbamoyl phosphate + L-aspartate = N-carbamoyl-L-aspartate + phosphate + H(+). It functions in the pathway pyrimidine metabolism; UMP biosynthesis via de novo pathway; (S)-dihydroorotate from bicarbonate: step 2/3. In terms of biological role, catalyzes the condensation of carbamoyl phosphate and aspartate to form carbamoyl aspartate and inorganic phosphate, the committed step in the de novo pyrimidine nucleotide biosynthesis pathway. This Burkholderia cenocepacia (strain HI2424) protein is Aspartate carbamoyltransferase catalytic subunit.